Here is a 621-residue protein sequence, read N- to C-terminus: 1-deoxy-D-xylulose-5-phosphate synthase (621 aa).

Residues His80 and 121–123 each bind thiamine diphosphate; that span reads GHS. Asp152 contributes to the Mg(2+) binding site. Thiamine diphosphate contacts are provided by residues 153–154, Asn181, Tyr288, and Glu370; that span reads GA. Asn181 provides a ligand contact to Mg(2+).

Belongs to the transketolase family. DXPS subfamily. As to quaternary structure, homodimer. It depends on Mg(2+) as a cofactor. Requires thiamine diphosphate as cofactor.

It carries out the reaction D-glyceraldehyde 3-phosphate + pyruvate + H(+) = 1-deoxy-D-xylulose 5-phosphate + CO2. It participates in metabolic intermediate biosynthesis; 1-deoxy-D-xylulose 5-phosphate biosynthesis; 1-deoxy-D-xylulose 5-phosphate from D-glyceraldehyde 3-phosphate and pyruvate: step 1/1. Catalyzes the acyloin condensation reaction between C atoms 2 and 3 of pyruvate and glyceraldehyde 3-phosphate to yield 1-deoxy-D-xylulose-5-phosphate (DXP). This Vibrio campbellii (strain ATCC BAA-1116) protein is 1-deoxy-D-xylulose-5-phosphate synthase.